We begin with the raw amino-acid sequence, 1062 residues long: Carbamoyl phosphate synthase pyrimidine-specific large chain (1062 aa).

The carboxyphosphate synthetic domain stretch occupies residues 1 to 401; it reads MGKREDIKKI…SLLKAVRSLE (401 aa). Residues R129, R169, G175, G176, K208, I210, E215, G241, V242, H243, Q284, and E298 each coordinate ATP. The region spanning 133–327 is the ATP-grasp 1 domain; it reads RALMKELNEP…IAKIAAKIAV (195 aa). Residues Q284, E298, and N300 each contribute to the Mg(2+) site. Mn(2+)-binding residues include Q284, E298, and N300. Residues 402-546 are oligomerization domain; the sequence is AGVYHLDQPD…YGTYEEENES (145 aa). Residues 547–929 are carbamoyl phosphate synthetic domain; that stretch reads ERTDKKSILV…ALYKGLIASG (383 aa). The ATP-grasp 2 domain maps to 671-861; it reads EQTLVELNIP…MANVATKVML (191 aa). The ATP site is built by R707, R746, L748, E752, G777, V778, H779, S780, Q820, and E832. The Mg(2+) site is built by Q820, E832, and N834. Mn(2+) is bound by residues Q820, E832, and N834. An MGS-like domain is found at 930–1062; the sequence is MSIPTHGSVL…FSAESMPVMQ (133 aa). Residues 930–1062 are allosteric domain; the sequence is MSIPTHGSVL…FSAESMPVMQ (133 aa).

The protein belongs to the CarB family. In terms of assembly, composed of two chains; the small (or glutamine) chain promotes the hydrolysis of glutamine to ammonia, which is used by the large (or ammonia) chain to synthesize carbamoyl phosphate. Tetramer of heterodimers (alpha,beta)4. The cofactor is Mg(2+). Requires Mn(2+) as cofactor.

It carries out the reaction hydrogencarbonate + L-glutamine + 2 ATP + H2O = carbamoyl phosphate + L-glutamate + 2 ADP + phosphate + 2 H(+). It catalyses the reaction hydrogencarbonate + NH4(+) + 2 ATP = carbamoyl phosphate + 2 ADP + phosphate + 2 H(+). Its pathway is amino-acid biosynthesis; L-arginine biosynthesis; carbamoyl phosphate from bicarbonate: step 1/1. It participates in pyrimidine metabolism; UMP biosynthesis via de novo pathway; (S)-dihydroorotate from bicarbonate: step 1/3. Small subunit of the glutamine-dependent carbamoyl phosphate synthetase (CPSase). CPSase catalyzes the formation of carbamoyl phosphate from the ammonia moiety of glutamine, carbonate, and phosphate donated by ATP, constituting the first step of the biosynthetic pathway leading to pyrimidine nucleotides. The large subunit (synthetase) binds the substrates ammonia (free or transferred from glutamine from the small subunit), hydrogencarbonate and ATP and carries out an ATP-coupled ligase reaction, activating hydrogencarbonate by forming carboxy phosphate which reacts with ammonia to form carbamoyl phosphate. The polypeptide is Carbamoyl phosphate synthase pyrimidine-specific large chain (pyrAB) (Halalkalibacterium halodurans (strain ATCC BAA-125 / DSM 18197 / FERM 7344 / JCM 9153 / C-125) (Bacillus halodurans)).